The primary structure comprises 598 residues: UvrABC system protein C (598 aa).

Residues 14 to 91 (DSPGCYLHKD…IQKNMPKYNI (78 aa)) enclose the GIY-YIG domain. The region spanning 196 to 231 (DKIIEDLRSKMLAASEEMAFERAAEYRDLISGIATM) is the UVR domain.

The protein belongs to the UvrC family. In terms of assembly, interacts with UvrB in an incision complex.

It is found in the cytoplasm. In terms of biological role, the UvrABC repair system catalyzes the recognition and processing of DNA lesions. UvrC both incises the 5' and 3' sides of the lesion. The N-terminal half is responsible for the 3' incision and the C-terminal half is responsible for the 5' incision. The protein is UvrABC system protein C of Streptococcus pyogenes serotype M18 (strain MGAS8232).